Reading from the N-terminus, the 366-residue chain is ACP-SH:acetate ligase (366 aa).

It localises to the cytoplasm. It catalyses the reaction holo-[ACP] + acetate + ATP = acetyl-[ACP] + AMP + diphosphate. In terms of biological role, acyl-carrier protein (ACP) acetate ligase of the biotin-dependent malonate decarboxylase multienzyme complex (EC 7.2.4.4). Involved in the conversion of the thiol group of the ACP-bound 2'-(5-phosphoribosyl)-3'-dephospho-CoA prosthetic group into its acetyl thioester using the energy from the hydrolysis of ATP. The chain is ACP-SH:acetate ligase (madH) from Malonomonas rubra.